We begin with the raw amino-acid sequence, 131 residues long: MDVTRLLLATLVGFLCFLTVHSHLVFEETLGDDRSLKSNSSINSLDFSSVSIVALNKKSKKISRKEAEKRKRSSKKKASIKKVARPPPPSPCVATRDSCKPPAPACCNPCASCQCRFFGSACTCRVLNPNC.

The first 22 residues, 1 to 22, serve as a signal peptide directing secretion; that stretch reads MDVTRLLLATLVGFLCFLTVHS. Asn39 carries N-linked (GlcNAc...) asparagine glycosylation. The segment at 58 to 96 is disordered; that stretch reads KSKKISRKEAEKRKRSSKKKASIKKVARPPPPSPCVATR. The segment covering 70–84 has biased composition (basic residues); sequence RKRSSKKKASIKKVA. Intrachain disulfides connect Cys92-Cys107, Cys99-Cys113, Cys106-Cys124, Cys110-Cys131, and Cys115-Cys122. The Agouti domain maps to 92-131; the sequence is CVATRDSCKPPAPACCNPCASCQCRFFGSACTCRVLNPNC.

It localises to the secreted. Involved in the regulation of melanogenesis. The binding of ASP to MC1R precludes alpha-MSH initiated signaling and thus blocks production of cAMP, leading to a down-regulation of eumelanogenesis (brown/black pigment) and thus increasing synthesis of pheomelanin (yellow/red pigment). The chain is Agouti-signaling protein from Rattus norvegicus (Rat).